The following is a 225-amino-acid chain: Fibronectin type III domain-containing protein 10 (225 aa).

Residues 1–19 form the signal peptide; it reads MRAPPLLLLLAACAPPSGA. Over 20-181 the chain is Extracellular; it reads AVDPTPPGWE…FTAEPAAMQE (162 aa). The Fibronectin type-III domain occupies 72–167; the sequence is LASAGGSLRA…ELAAAPPELA (96 aa). N-linked (GlcNAc...) asparagine glycans are attached at residues N86 and N109. Residues 182–202 form a helical membrane-spanning segment; that stretch reads IVVAMTAVGGSICVMLVVICL. Residues 203–225 are Cytoplasmic-facing; it reads LVAYITENLMHPTFRRPSLRRQP.

The protein resides in the membrane. This Rattus norvegicus (Rat) protein is Fibronectin type III domain-containing protein 10 (Fndc10).